The chain runs to 581 residues: MEVNSKPGILKRIAGPVVTAVDLDAHMYDVVKVGNEELMGEVIKIDGADTVIQVYESTTGIRPGEPVINTGLSLAVELGPGLLTSIYDGIQRPLEVLIQKMGNFIARGVTAPGLDHEKKWTFKPVVHVGDNVVPGQIVGEVQETRSIVHKIMVPPLAKGGKVTKINAGDFTVDEIVIELDSGESFPMMQKWPVRVPRPYVEKHSPSIPLLTGQRILDGLFPIAKGGTAAIPGPFGSGKTVTQQQLAKWSDAEIVVYIGCGERGNEMTEVLTEFPELQDPKTGNSLMERTILIANTSNMPVAAREASVYTGITLAEYFRDMGYDVALMADSTSRWAEAMREICSRLEEMPGEEGYPAYLSSRLSEFYERAGLVEPLAGGSGSVSVIGAVSPAGGDFSEPVTQNTLRIVKVFWALDANLSRRRHFPAINWLQSYSLYMAQLNDYYDEKVSPDWNKLRSWFMEVLQKEAELQEIVQLVGSDALPETEQITIEVARMMRELFLQQNGFDPVDTYCDLPKQLDMFKMIRTYADLAYAAQAAGVPPSQILAVKAKNEMPQVKFTKDYKPVLDKIYAGMEAEFKALRA.

232-239 (GPFGSGKT) is a binding site for ATP.

The protein belongs to the ATPase alpha/beta chains family. Has multiple subunits with at least A(3), B(3), C, D, E, F, H, I and proteolipid K(x).

It localises to the cell membrane. It carries out the reaction ATP + H2O + 4 H(+)(in) = ADP + phosphate + 5 H(+)(out). In terms of biological role, component of the A-type ATP synthase that produces ATP from ADP in the presence of a proton gradient across the membrane. The A chain is the catalytic subunit. This Methanocorpusculum labreanum (strain ATCC 43576 / DSM 4855 / Z) protein is A-type ATP synthase subunit A.